Here is a 338-residue protein sequence, read N- to C-terminus: Heat-inducible transcription repressor HrcA (338 aa).

The protein belongs to the HrcA family.

Its function is as follows. Negative regulator of class I heat shock genes (grpE-dnaK-dnaJ and groELS operons). Prevents heat-shock induction of these operons. The sequence is that of Heat-inducible transcription repressor HrcA from Bacillus anthracis (strain A0248).